Reading from the N-terminus, the 353-residue chain is Guanine nucleotide-binding protein subunit beta-5 (353 aa).

WD repeat units follow at residues Gly-61–Ala-100, Met-103–Met-142, Met-151–His-192, His-194–Glu-236, Thr-237–Ile-276, Ser-278–Ile-320, and Gly-323–Trp-352.

Belongs to the WD repeat G protein beta family. As to quaternary structure, component of a complex composed of RGS9 (isoform RGS9-1), GNB5 and RGS9BP; within this complex, the presence of GNB5 stabilizes both itself and RGS9 and increases RGS9 GTPase-activating protein (GAP) activity. Interacts with RGS7, forming the RGS7-GNB5 complex; within this complex, the presence of GNB5 increases RGS7 GTPase-activating protein (GAP) activity. Interacts with GPR158; promotes the GTPase activator activity of the RGS7-GNB5 complex in absence of glycine, in contrast GTPase activator activity of the RGS7-GNB5 complex is inhibited in presence of glycine. Interacts with RGS6.

The protein resides in the membrane. In terms of biological role, enhances GTPase-activating protein (GAP) activity of regulator of G protein signaling (RGS) proteins, such as RGS7 and RGS9, hence involved in the termination of the signaling initiated by the G protein coupled receptors (GPCRs) by accelerating the GTP hydrolysis on the G-alpha subunits, thereby promoting their inactivation. Increases RGS7 GTPase-activating protein (GAP) activity, thereby regulating mood and cognition. Increases RGS9 GTPase-activating protein (GAP) activity, hence contributes to the deactivation of G protein signaling initiated by D(2) dopamine receptors. May play an important role in neuronal signaling, including in the parasympathetic, but not sympathetic, control of heart rate. The protein is Guanine nucleotide-binding protein subunit beta-5 (GNB5) of Oryctolagus cuniculus (Rabbit).